We begin with the raw amino-acid sequence, 552 residues long: Serine/threonine-protein kinase RIO2 (552 aa).

The 176-residue stretch at 97-272 (VGNQMGVGKE…DRDVKCIKDF (176 aa)) folds into the Protein kinase domain. K123 lines the ATP pocket. Residue D228 is the Proton acceptor of the active site. 9 positions are modified to phosphoserine: S332, S335, S337, S350, S362, S380, S382, S385, and S390. The Nuclear export signal signature appears at 399–408 (ALEEIKGQVV). 3 positions are modified to phosphoserine: S412, S417, and S442. Phosphotyrosine is present on Y445. At S548 the chain carries Phosphoserine.

It belongs to the protein kinase superfamily. RIO-type Ser/Thr kinase family. As to quaternary structure, associated with late 40S pre-ribosomal particles. Interacts with PLK1 (via its N-terminus). Mg(2+) is required as a cofactor. Autophosphorylated (in vitro). Phosphorylation at Ser-335, Ser-380, Ser-548 by PLK1 affects the timing of the metaphase-anaphase transition.

The protein localises to the cytoplasm. The enzyme catalyses L-seryl-[protein] + ATP = O-phospho-L-seryl-[protein] + ADP + H(+). The catalysed reaction is L-threonyl-[protein] + ATP = O-phospho-L-threonyl-[protein] + ADP + H(+). Its function is as follows. Serine/threonine-protein kinase involved in the final steps of cytoplasmic maturation of the 40S ribosomal subunit. Involved in export of the 40S pre-ribosome particles (pre-40S) from the nucleus to the cytoplasm. Its kinase activity is required for the release of NOB1, PNO1 and LTV1 from the late pre-40S and the processing of 18S-E pre-rRNA to the mature 18S rRNA. Regulates the timing of the metaphase-anaphase transition during mitotic progression, and its phosphorylation, most likely by PLK1, regulates this function. This chain is Serine/threonine-protein kinase RIO2, found in Homo sapiens (Human).